A 131-amino-acid polypeptide reads, in one-letter code: Leptin receptor overlapping transcript-like 1 (131 aa).

Transmembrane regions (helical) follow at residues 7 to 27 (LISL…GCAL), 32 to 52 (KYWP…YCIA), 69 to 89 (LAIF…IVFA), and 100 to 120 (ALVL…FLVF).

This sequence belongs to the OB-RGRP/VPS55 family. Interacts with RAB13. In terms of tissue distribution, widely expressed, with highest expression in heart, testis, adrenal gland, thymus, and spleen, and lowest expression in lung and skeletal muscle.

It localises to the membrane. Its function is as follows. Negatively regulates growth hormone (GH) receptor cell surface expression in liver. May play a role in liver resistance to GH during periods of reduced nutrient availability. The sequence is that of Leptin receptor overlapping transcript-like 1 (LEPROTL1) from Homo sapiens (Human).